The primary structure comprises 324 residues: HPr kinase/phosphorylase (324 aa).

Active-site residues include His146 and Lys167. 161-168 (GDSGLGKS) is an ATP binding site. A Mg(2+)-binding site is contributed by Ser168. The active-site Proton acceptor; for phosphorylation activity. Proton donor; for dephosphorylation activity is the Asp185. The tract at residues 209 to 218 (LEVRGLGLLD) is important for the catalytic mechanism of both phosphorylation and dephosphorylation. Glu210 contacts Mg(2+). The active site involves Arg250. Residues 271 to 276 (QVAAGR) are important for the catalytic mechanism of dephosphorylation.

The protein belongs to the HPrK/P family. In terms of assembly, homohexamer. The cofactor is Mg(2+).

The catalysed reaction is [HPr protein]-L-serine + ATP = [HPr protein]-O-phospho-L-serine + ADP + H(+). It catalyses the reaction [HPr protein]-O-phospho-L-serine + phosphate + H(+) = [HPr protein]-L-serine + diphosphate. Functionally, catalyzes the ATP- as well as the pyrophosphate-dependent phosphorylation of a specific serine residue in HPr, a phosphocarrier protein of the phosphoenolpyruvate-dependent sugar phosphotransferase system (PTS). HprK/P also catalyzes the pyrophosphate-producing, inorganic phosphate-dependent dephosphorylation (phosphorolysis) of seryl-phosphorylated HPr (P-Ser-HPr). The chain is HPr kinase/phosphorylase from Ralstonia pickettii (strain 12J).